Consider the following 176-residue polypeptide: Envelope protein 167 (176 aa).

M1 is a topological domain (intravirion). A helical membrane pass occupies residues 2-22; that stretch reads YLVLLIAIILFITIILVIFLI. The Virion surface segment spans residues 23-176; it reads SGLFYPEQNP…AVMAIPRKVL (154 aa).

This sequence belongs to the asfivirus envelope protein p22 family.

The protein resides in the virion membrane. It localises to the host cell membrane. This chain is Envelope protein 167, found in African swine fever virus (isolate Warthog/Namibia/Wart80/1980) (ASFV).